We begin with the raw amino-acid sequence, 414 residues long: Dihydroorotase (414 aa).

Zn(2+) contacts are provided by His-57 and His-59. Substrate is bound by residues 59–61 (HLR) and Asn-91. Lys-135, His-164, His-204, and Asp-272 together coordinate Zn(2+). Lys-135 carries the N6-carboxylysine modification. Asp-272 is an active-site residue. Substrate is bound by residues His-276 and 286 to 287 (AG).

This sequence belongs to the metallo-dependent hydrolases superfamily. DHOase family. Class I DHOase subfamily. The cofactor is Zn(2+).

The enzyme catalyses (S)-dihydroorotate + H2O = N-carbamoyl-L-aspartate + H(+). It functions in the pathway pyrimidine metabolism; UMP biosynthesis via de novo pathway; (S)-dihydroorotate from bicarbonate: step 3/3. In terms of biological role, catalyzes the reversible cyclization of carbamoyl aspartate to dihydroorotate. In Pyrococcus furiosus (strain ATCC 43587 / DSM 3638 / JCM 8422 / Vc1), this protein is Dihydroorotase.